A 256-amino-acid chain; its full sequence is MSKRPADIVISTPASKVRRKLNFNSPFKSAAAVPTVRVTRRRTWVNRPMYRKPMMYRLFRSPDVPRGCEGPCKVQSYEQRHDVAHVGKVLCVSDVTRGTGITHRTGKRFCIKSIYVLGKIWMDDNIKTRNHTNTVMFFLVRDRRPYGTPKDFGQVFNMYDNEPSTATVKNDMRDGFQVIKKWSATVTGGQYASKEQAIINRFYKIYNHCTYNHQEAAKYENHTENALLLYMACTHASNPVYATLKIRIYFYDSIQN.

The short motif at 3–20 (KRPADIVISTPASKVRRK) is the Bipartite nuclear localization signal element. The Nuclear localization signal motif lies at 40–54 (RRRTWVNRPMYRKPM). A zinc finger spans residues 68–85 (CEGPCKVQSYEQRHDVAH). The Nuclear export signal signature appears at 101-122 (ITHRTGKRFCIKSIYVLGKIWM). Positions 200–247 (NRFYKIYNHCTYNHQEAAKYENHTENALLLYMACTHASNPVYATLKIR) match the Bipartite nuclear localization signal motif.

It belongs to the geminiviridae capsid protein family. Homomultimer. Binds to single-stranded and double-stranded viral DNA. Interacts (via nuclear localization signals) with host importin alpha-1a.

The protein resides in the virion. It is found in the host nucleus. Its function is as follows. Encapsidates the viral genome into characteristic twinned ('geminate') particles. Binds the genomic viral ssDNA and shuttles it into and out of the cell nucleus. Plays a role in protection of the genome from degradation, virus acquisition and transmission by insect vectors, infectivity, and systemic movement. The CP of monopartite geminiviruses is absolutely essential for virus movement. This is Capsid protein from Tomato leaf curl virus (strain Australia) (ToLCV).